The chain runs to 277 residues: Collectin-10 (277 aa).

The N-terminal stretch at 1–27 (MSRKKEQQLRKYGTLVVLFIFQVQIFG) is a signal peptide. Residues 41-82 (THTILPGPKGDDGEKGDRGEVGKQGKVGPKGPKGNKGTVGDV) form a disordered region. Residues 49-63 (KGDDGEKGDRGEVGK) show a composition bias toward basic and acidic residues. The Collagen-like domain maps to 56–115 (GDRGEVGKQGKVGPKGPKGNKGTVGDVGDQGMLGKIGPIGGKGDKGAKGISGVSGKKGKA). Positions 64 to 79 (QGKVGPKGPKGNKGTV) are enriched in low complexity. Residues 155 to 271 (TDEKFYYIVK…CQVTIYFICE (117 aa)) enclose the C-type lectin domain. 2 disulfides stabilise this stretch: Cys176/Cys270 and Cys248/Cys262. N-linked (GlcNAc...) asparagine glycosylation is present at Asn258.

It belongs to the COLEC10/COLEC11 family. As to expression, widely expressed. Highly expressed in lung. Weakly expressed in larynx, syrinx and cranial air sac. Expressed throughout the lower gastrointestinal tract in increasing levels starting from a faint signal in duodenum and ending with relatively high signals in proctodeum, coprodeum and urodeum. In the upper part of the gastrointestinal tract, expressed in tongue, crop, and mucosa of the crop.

It is found in the secreted. The protein resides in the golgi apparatus. It localises to the cytoplasm. Its function is as follows. Lectin that binds to various sugars: galactose &gt; mannose = fucose &gt; N-acetylglucosamine &gt; N-acetylgalactosamine. Acts as a chemoattractant, probably involved in the regulation of cell migration. This chain is Collectin-10 (COLEC10), found in Gallus gallus (Chicken).